The sequence spans 128 residues: Small ribosomal subunit protein uS11 (128 aa).

This sequence belongs to the universal ribosomal protein uS11 family. Part of the 30S ribosomal subunit. Interacts with proteins S7 and S18. Binds to IF-3.

Functionally, located on the platform of the 30S subunit, it bridges several disparate RNA helices of the 16S rRNA. Forms part of the Shine-Dalgarno cleft in the 70S ribosome. This Desulforudis audaxviator (strain MP104C) protein is Small ribosomal subunit protein uS11.